The following is a 152-amino-acid chain: Deoxyuridine 5'-triphosphate nucleotidohydrolase (152 aa).

Residues 71–73 (RSG), asparagine 84, 88–90 (LID), and methionine 98 contribute to the substrate site.

The protein belongs to the dUTPase family. Mg(2+) is required as a cofactor.

The catalysed reaction is dUTP + H2O = dUMP + diphosphate + H(+). It functions in the pathway pyrimidine metabolism; dUMP biosynthesis; dUMP from dCTP (dUTP route): step 2/2. This enzyme is involved in nucleotide metabolism: it produces dUMP, the immediate precursor of thymidine nucleotides and it decreases the intracellular concentration of dUTP so that uracil cannot be incorporated into DNA. The sequence is that of Deoxyuridine 5'-triphosphate nucleotidohydrolase from Cronobacter sakazakii (strain ATCC BAA-894) (Enterobacter sakazakii).